Consider the following 33-residue polypeptide: U23-ctenitoxin-Pn1a (33 aa).

3 disulfide bridges follow: Cys3–Cys16, Cys10–Cys21, and Cys15–Cys30.

As to expression, expressed by the venom gland.

It localises to the secreted. In terms of biological role, non-toxic to mice. The protein is U23-ctenitoxin-Pn1a of Phoneutria nigriventer (Brazilian armed spider).